We begin with the raw amino-acid sequence, 87 residues long: Omega-lycotoxin-Am1b (87 aa).

An N-terminal signal peptide occupies residues 1–17; that stretch reads MKLSIFFVLFFIAIAYC. The propeptide occupies 18–40; that stretch reads QPEFLDDEEDEVEETLPVAEEGR. 4 cysteine pairs are disulfide-bonded: Cys44-Cys59, Cys51-Cys64, Cys58-Cys84, and Cys66-Cys82.

This sequence belongs to the neurotoxin omega-lctx family. In terms of tissue distribution, expressed by the venom gland.

Its subcellular location is the secreted. Its function is as follows. Modulates Cav2.1/CACNA1A voltage-gated calcium channels (P/Q-type currents) in rat cerebellar Purkinje cells and hippocampal CA1-CA3 neurons. At saturating concentrations (&gt;10 nM) decelerates activation kinetics and slightly increases peak amplitude without affecting deactivation kinetics. In vivo, does not cause death when intravenously injected into mice. In rat models, through its activity on Cav2.1/CACNA1A, has an ameliorative effect on memory defects provoked by hyperstimulation of N-methyl-D-aspartate receptors (NMDARs) in the hippocampus. The chain is Omega-lycotoxin-Am1b from Alopecosa marikovskyi (Wolf spider).